Here is a 710-residue protein sequence, read N- to C-terminus: Solute carrier family 15 member 1 (710 aa).

The chain crosses the membrane as a helical span at residues 1–21 (MGMSKSRGCFGYPLSIFFIVV). Over 22-53 (NEFCERFSYYGMRALLVLYFRNFLGWDDDLST) the chain is Extracellular. Residues 54–74 (AIYHTFVALCYLTPILGALIA) form a helical membrane-spanning segment. Topologically, residues 75–82 (DSWLGKFK) are cytoplasmic. A helical membrane pass occupies residues 83–103 (TIVSLSIVYTIGQAVISVSSI). Over 104-118 (NDLTDHDHDGSPNNL) the chain is Extracellular. A helical membrane pass occupies residues 119-139 (PLHVALSMIGLALIALGTGGI). Residues 140–161 (KPCVSAFGGDQFEEGQEKQRNR) are Cytoplasmic-facing. Residues 162 to 182 (FFSIFYLAINAGSLLSTIITP) form a helical membrane-spanning segment. The Extracellular portion of the chain corresponds to 183-198 (ILRVQQCGIHSQQACY). A helical membrane pass occupies residues 199-219 (PLAFGVPAALMAVALIVFVLG). Residues 220-276 (SGMYKKFQPQGNIMGKVAKCIRFAIKNRFRHRSKAFPKRNHWLDWAKEKYDERLISQ) are Cytoplasmic-facing. Residues 277–297 (IKIMTKVMFLYIPLPMFWALF) form a helical membrane-spanning segment. Residues 298 to 327 (DQQGSRWTLQATTMTGKIGTIEIQPDQMQT) are Extracellular-facing. Residues 328 to 348 (VNAILIVIMVPIVDAVVYPLI) form a helical membrane-spanning segment. Residues 349 to 361 (AKCGFNFTSLKKM) are Cytoplasmic-facing. Residues 362 to 382 (TVGMFLASMAFVVAAIVQVEI) form a helical membrane-spanning segment. At 383 to 586 (DKTLPVFPSG…PPNTVNMALQ (204 aa)) the chain is on the extracellular side. An extracellular domain (ECD) region spans residues 383–586 (DKTLPVFPSG…PPNTVNMALQ (204 aa)). 5 N-linked (GlcNAc...) asparagine glycosylation sites follow: Asn-415, Asn-439, Asn-510, Asn-532, and Asn-539. The chain crosses the membrane as a helical span at residues 587–607 (IPQYFLLTCGEVVFSVTGLEF). Residues 608-621 (SYSQAPSNMKSVLQ) are Cytoplasmic-facing. A helical membrane pass occupies residues 622–642 (AGWLLTVAIGNIIVLIVAEAG). The Extracellular portion of the chain corresponds to 643–647 (HFDKQ). Residues 648 to 668 (WAEYVLFASLLLVVCIIFAIM) form a helical membrane-spanning segment. At 669 to 710 (ARFYTYINPAEIEAQFDEDEKKKGVGKENPYSSLEPVSQTNM) the chain is on the cytoplasmic side. The interval 687 to 710 (DEKKKGVGKENPYSSLEPVSQTNM) is disordered. Residues 698 to 710 (PYSSLEPVSQTNM) are compositionally biased toward polar residues.

This sequence belongs to the major facilitator superfamily. Proton-dependent oligopeptide transporter (POT/PTR) (TC 2.A.17) family. Interacts (via extracellular domain region) with trypsin. In terms of tissue distribution, highly expressed in small intestine. As to expression, expression is restricted to pinealocytes.

It is found in the apical cell membrane. It carries out the reaction a dipeptide(out) + H(+)(out) = a dipeptide(in) + H(+)(in). The catalysed reaction is an L-amino acid tripeptide(out) + H(+)(out) = an L-amino acid tripeptide(in) + H(+)(in). It catalyses the reaction L-alanyl-L-lysine(out) + H(+)(out) = L-alanyl-L-lysine(in) + H(+)(in). The enzyme catalyses L-alanyl-L-proline(out) + H(+)(out) = L-alanyl-L-proline(in) + H(+)(in). It carries out the reaction L-alanyl-L-valine(out) + H(+)(out) = L-alanyl-L-valine(in) + H(+)(in). The catalysed reaction is carnosine(out) + H(+)(out) = carnosine(in) + H(+)(in). It catalyses the reaction glycyl-L-glutamine(out) + H(+)(out) = glycyl-L-glutamine(in) + H(+)(in). The enzyme catalyses glycyl-L-leucine(out) + H(+)(out) = glycyl-L-leucine(in) + H(+)(in). It carries out the reaction glycyl-L-proline(out) + H(+)(out) = glycyl-L-proline(in) + H(+)(in). The catalysed reaction is glycyl-sarcosine(out) + H(+)(out) = glycyl-sarcosine(in) + H(+)(in). It catalyses the reaction L-leucyl-L-leucine(out) + H(+)(out) = L-leucyl-L-leucine(in) + H(+)(in). The enzyme catalyses L-leucyl-L-proline(out) + H(+)(out) = L-leucyl-L-proline(in) + H(+)(in). It carries out the reaction L-phenylalanyl-L-leucine(out) + H(+)(out) = L-phenylalanyl-L-leucine(in) + H(+)(in). The catalysed reaction is L-phenylalanyl-L-phenylalanine(out) + H(+)(out) = L-phenylalanyl-L-phenylalanine(in) + H(+)(in). It catalyses the reaction L-lysyl-glycine(out) + H(+)(out) = L-lysyl-glycine(in) + H(+)(in). The enzyme catalyses L-tyrosylglycine(out) + H(+)(out) = L-tyrosylglycine(in) + H(+)(in). It carries out the reaction L-alanyl-L-aspartate(out) + 2 H(+)(out) = L-alanyl-L-aspartate(in) + 2 H(+)(in). The catalysed reaction is L-aspartyl-glycine(out) + 2 H(+)(out) = L-aspartyl-glycine(in) + 2 H(+)(in). It catalyses the reaction glycyl-L-aspartate(out) + 2 H(+)(out) = glycyl-L-aspartate(in) + 2 H(+)(in). The enzyme catalyses glycyl-L-glutamate(out) + 2 H(+)(out) = glycyl-L-glutamate(in) + 2 H(+)(in). It carries out the reaction L-alanyl-L-leucyl-L-alanine(out) + H(+)(out) = L-alanyl-L-leucyl-L-alanine(in) + H(+)(in). The catalysed reaction is L-alanyl-L-prolylglycine(out) + H(+)(out) = L-alanyl-L-prolylglycine(in) + H(+)(in). It catalyses the reaction glycylglycyl-L-isoleucine(out) + H(+)(out) = glycylglycyl-L-isoleucine(in) + H(+)(in). The enzyme catalyses glycylglycyl-L-proline(out) + H(+)(out) = glycylglycyl-L-proline(in) + H(+)(in). It carries out the reaction L-methionyl-L-phenylalanyl-L-methionine(out) + H(+)(out) = L-methionyl-L-phenylalanyl-L-methionine(in) + H(+)(in). The catalysed reaction is N-acetyl-D-muramoyl-L-alanyl-D-isoglutamine(out) + 2 H(+)(out) = N-acetyl-D-muramoyl-L-alanyl-D-isoglutamine(in) + 2 H(+)(in). It catalyses the reaction N(alpha)-formyl-L-methionyl-L-leucyl-L-phenylalanine(out) + 2 H(+)(out) = N(alpha)-formyl-L-methionyl-L-leucyl-L-phenylalanine(in) + 2 H(+)(in). In terms of biological role, electrogenic proton-coupled amino-acid transporter that transports oligopeptides of 2 to 4 amino acids with a preference for dipeptides. Transports neutral and monovalently charged peptides with a proton to peptide stoichiometry of 1:1 or 2:1. Primarily responsible for the absorption of dietary di- and tripeptides from the small intestinal lumen. Mediates transepithelial transport of muramyl and N-formylated bacterial dipeptides contributing to recognition of pathogenic bacteria by the mucosal immune system. The protein is Solute carrier family 15 member 1 (Slc15a1) of Rattus norvegicus (Rat).